An 86-amino-acid polypeptide reads, in one-letter code: Putative membrane protein insertion efficiency factor (86 aa).

The protein belongs to the UPF0161 family.

The protein localises to the cell inner membrane. In terms of biological role, could be involved in insertion of integral membrane proteins into the membrane. The chain is Putative membrane protein insertion efficiency factor from Pseudomonas aeruginosa (strain LESB58).